Consider the following 558-residue polypeptide: Cyclomaltodextrinase (558 aa).

Residues N143, G168, and D170 each contribute to the Ca(2+) site. Residues H243 and R323 each coordinate substrate. Residue D325 is the Nucleophile of the active site. E354 (proton donor) is an active-site residue. Residues 420–421 (HD), D465, and R469 each bind substrate.

This sequence belongs to the glycosyl hydrolase 13 family. Monomer. Depending on the pH of the solution, exists as a monomer, a homodimer or as an assembly of six homodimers forming a dodecamer, which is catalytically the most efficient form of the enzyme. Ca(2+) is required as a cofactor.

The enzyme catalyses cyclomaltodextrin + H2O = linear maltodextrin. The catalysed reaction is Hydrolysis of pullulan to panose (6-alpha-D-glucosylmaltose).. Hydrolysis of beta-cyclodextrin is inhibited by Cu(2+), Zn(2+) and Ag(+), and activated by Ca(2+), EGTA and EDTA. Activity is increased over twofold in the presence of 5 mM EDTA. Competitively inhibited by acarbose and methyl 6-amino-6-deoxy-alpha-D-glucopyranoside by reducing the rate of the ring opening step of the reaction. Its function is as follows. Hydrolyzes alpha-, beta- and gamma-cyclodextrins and the resulting linear maltodextrins, with the highest activity with beta-cyclodextrin (cyclomaltoheptaose). Soluble starch is hydrolyzed slowly, but it is nevertheless preferred over pullulan as a substrate. Is able to hydrolyze amylose and amylopectin, with a very strong preference for amylose, with maltose and glucose as the main products. Maltose and glucose are the main hydrolysis products of cyclomaltodextrins, maltodextrins and starch, whereas panose is the main hydrolysis product of pullulan. Acarbose is partially hydrolyzed to glucose and pseudotrisaccharide. No activity with maltose as substrate. Has transglycosylating activity with high concentrations of maltotriose, maltotetraose and starch. The protein is Cyclomaltodextrinase of Bacillus sp.